The chain runs to 253 residues: Probable transcriptional regulatory protein RC0681 (253 aa).

Residues Met-1–Arg-21 are disordered.

It belongs to the TACO1 family.

The protein resides in the cytoplasm. In Rickettsia conorii (strain ATCC VR-613 / Malish 7), this protein is Probable transcriptional regulatory protein RC0681.